Consider the following 347-residue polypeptide: Dual specificity mitogen-activated protein kinase kinase 3 (347 aa).

Residue Met1 is modified to N-acetylmethionine. Pro residues predominate over residues Met1–Ser11. The tract at residues Met1–Asp45 is disordered. Ser3 is modified (phosphoserine). In terms of domain architecture, Protein kinase spans Leu64–Phe325. Residues Leu70 to Val78 and Lys93 contribute to the ATP site. The active-site Proton acceptor is the Asp190. Phosphoserine is present on Ser218. A Phosphothreonine modification is found at Thr222.

Belongs to the protein kinase superfamily. STE Ser/Thr protein kinase family. MAP kinase kinase subfamily. In terms of assembly, component of a signaling complex containing at least AKAP13, PKN1, MAPK14, ZAK and MAP2K3. Within this complex, AKAP13 interacts directly with PKN1, which in turn recruits MAPK14, MAP2K3 and ZAK. Binds to DYRK1B/MIRK and increases its kinase activity. Part of a complex with MAP3K3, RAC1 and CCM2. Interacts with ARRB1. Post-translationally, autophosphorylated. Phosphorylation on Ser-218 and Thr-222 by MAP kinase kinase kinases positively regulates the kinase activity. Phosphorylated by TAOK2.

The enzyme catalyses L-seryl-[protein] + ATP = O-phospho-L-seryl-[protein] + ADP + H(+). It catalyses the reaction L-threonyl-[protein] + ATP = O-phospho-L-threonyl-[protein] + ADP + H(+). The catalysed reaction is L-tyrosyl-[protein] + ATP = O-phospho-L-tyrosyl-[protein] + ADP + H(+). Activated by dual phosphorylation on Ser-218 and Thr-222. Its function is as follows. Dual specificity kinase. Is activated by cytokines and environmental stress in vivo. Catalyzes the concomitant phosphorylation of a threonine and a tyrosine residue in the MAP kinase p38. Part of a signaling cascade that begins with the activation of the adrenergic receptor ADRA1B and leads to the activation of MAPK14. The polypeptide is Dual specificity mitogen-activated protein kinase kinase 3 (Map2k3) (Mus musculus (Mouse)).